A 220-amino-acid chain; its full sequence is Grancalcin (220 aa).

EF-hand domains lie at 51–86, 92–127, 122–157, and 158–193; these read SPADDSMWTYFTAVAGQDGEVDAEELQRCLTQSGIS, FSLETCRIMIAMLDRDYTGKMGFNEFKELWAALNAW, AALNAWKQNFMTIDQDQSGTVEHHELSQAIALMGYR, and LSPQTLAAIVRRYSKNGRIFFDDYVACCVKLRALTD. Ca(2+) contacts are provided by aspartate 105, aspartate 107, threonine 109, lysine 111, glutamate 116, aspartate 135, aspartate 137, serine 139, threonine 141, and glutamate 146.

Homodimer. Interacts with SRI and LCP1.

It localises to the cytoplasm. The protein localises to the cytoplasmic granule membrane. Calcium-binding protein that may play a role in the adhesion of neutrophils to fibronectin. May play a role in the formation of focal adhesions. This Mus musculus (Mouse) protein is Grancalcin (Gca).